The following is a 485-amino-acid chain: Ribulose bisphosphate carboxylase large chain (485 aa).

Positions 124 and 174 each coordinate substrate. The Proton acceptor role is filled by Lys176. Position 178 (Lys178) interacts with substrate. Residues Lys202, Asp204, and Glu205 each contribute to the Mg(2+) site. An N6-carboxylysine modification is found at Lys202. His294 (proton acceptor) is an active-site residue. Positions 295, 327, and 379 each coordinate substrate.

It belongs to the RuBisCO large chain family. Type I subfamily. In terms of assembly, heterohexadecamer of 8 large chains and 8 small chains. It depends on Mg(2+) as a cofactor.

It catalyses the reaction 2 (2R)-3-phosphoglycerate + 2 H(+) = D-ribulose 1,5-bisphosphate + CO2 + H2O. It carries out the reaction D-ribulose 1,5-bisphosphate + O2 = 2-phosphoglycolate + (2R)-3-phosphoglycerate + 2 H(+). Its function is as follows. RuBisCO catalyzes two reactions: the carboxylation of D-ribulose 1,5-bisphosphate, the primary event in carbon dioxide fixation, as well as the oxidative fragmentation of the pentose substrate. Both reactions occur simultaneously and in competition at the same active site. The sequence is that of Ribulose bisphosphate carboxylase large chain from Rhodopseudomonas palustris (strain BisA53).